A 238-amino-acid chain; its full sequence is MRPSKRRPDQLRSVQITRHYTRHAEGSVLIECGDTRIICTASVDEKVPLFLRGKGQGWLTAEYGMLPRSTNERMQREAAKGKQSGRTMEIQRLIGRALRSVMDLTKLGERTIQVDCDVIQADGGTRTASITGAFVAVHDAIGTLLRKQAIEATPITGHVAAVSVGVYEGVPMLDLDYLEDSRCDTDMNIVMTDDLGLVEMQGTAEGMPFSRNDLDMMLDLAQQGIRELIAAQKNALNR.

Residues R86 and 124–126 contribute to the phosphate site; that span reads GTR.

It belongs to the RNase PH family. In terms of assembly, homohexameric ring arranged as a trimer of dimers.

The catalysed reaction is tRNA(n+1) + phosphate = tRNA(n) + a ribonucleoside 5'-diphosphate. Its function is as follows. Phosphorolytic 3'-5' exoribonuclease that plays an important role in tRNA 3'-end maturation. Removes nucleotide residues following the 3'-CCA terminus of tRNAs; can also add nucleotides to the ends of RNA molecules by using nucleoside diphosphates as substrates, but this may not be physiologically important. Probably plays a role in initiation of 16S rRNA degradation (leading to ribosome degradation) during starvation. This Nitrosospira multiformis (strain ATCC 25196 / NCIMB 11849 / C 71) protein is Ribonuclease PH.